A 285-amino-acid polypeptide reads, in one-letter code: MSERLALYARLVRIDKPIGTLLLLWPTLWALWMAAGGPPALSVFCIFFAGTFLMRSAGCAINDYADRDFDKHVKRTKERPLTAGKIAAWEAVLIAAVLALIAFALILPLNSLTKWLAVVAAVVAGTYPFFKRFFAIPQAYLGIAFGFGIPMAFAAVQDQVPLVAWVMLLANVFWAVAYDTAYAMVDRDDDLLIGIKTSAITFGRFDVAAIMLCYAAFLVLMGWAGVMLSLGWPYWVGLAAAAVCAGYHYTLIRDRDRMRCFAAFRHNNWLGACVFAGTAVAYAIR.

8 helical membrane-spanning segments follow: residues 28 to 48 (LWALWMAAGGPPALSVFCIFF), 86 to 106 (IAAWEAVLIAAVLALIAFALI), 110 to 130 (NSLTKWLAVVAAVVAGTYPFF), 133 to 153 (FFAIPQAYLGIAFGFGIPMAF), 160 to 180 (VPLVAWVMLLANVFWAVAYDT), 207 to 227 (VAAIMLCYAAFLVLMGWAGVM), 232 to 252 (WPYWVGLAAAAVCAGYHYTLI), and 262 to 284 (AAFRHNNWLGACVFAGTAVAYAI).

This sequence belongs to the UbiA prenyltransferase family. The cofactor is Mg(2+).

The protein localises to the cell inner membrane. The catalysed reaction is all-trans-octaprenyl diphosphate + 4-hydroxybenzoate = 4-hydroxy-3-(all-trans-octaprenyl)benzoate + diphosphate. It functions in the pathway cofactor biosynthesis; ubiquinone biosynthesis. Its function is as follows. Catalyzes the prenylation of para-hydroxybenzoate (PHB) with an all-trans polyprenyl group. Mediates the second step in the final reaction sequence of ubiquinone-8 (UQ-8) biosynthesis, which is the condensation of the polyisoprenoid side chain with PHB, generating the first membrane-bound Q intermediate 3-octaprenyl-4-hydroxybenzoate. The polypeptide is 4-hydroxybenzoate octaprenyltransferase (Cupriavidus pinatubonensis (strain JMP 134 / LMG 1197) (Cupriavidus necator (strain JMP 134))).